A 388-amino-acid polypeptide reads, in one-letter code: Transposase for insertion sequence element IS406 (388 aa).

It belongs to the transposase mutator family.

Functionally, required for the transposition of the insertion element. In Burkholderia multivorans (strain ATCC 17616 / 249), this protein is Transposase for insertion sequence element IS406.